The following is a 319-amino-acid chain: ATP-dependent 6-phosphofructokinase (319 aa).

Gly11 is an ATP binding site. Residue Arg21 to Arg25 coordinates ADP. ATP contacts are provided by residues Arg72–Tyr73 and Gly102–Ser105. Asp103 contributes to the Mg(2+) binding site. Thr125–Asp127 is a binding site for substrate. Asp127 acts as the Proton acceptor in catalysis. Arg154 contributes to the ADP binding site. Residues Arg162 and Met169–Arg171 contribute to the substrate site. ADP-binding positions include Gly185–Glu187, Arg211, and Lys213–His215. Residues Glu222, Arg243, and His249–Arg252 contribute to the substrate site.

This sequence belongs to the phosphofructokinase type A (PFKA) family. ATP-dependent PFK group I subfamily. Prokaryotic clade 'B1' sub-subfamily. Homotetramer. Requires Mg(2+) as cofactor.

It is found in the cytoplasm. It carries out the reaction beta-D-fructose 6-phosphate + ATP = beta-D-fructose 1,6-bisphosphate + ADP + H(+). Its pathway is carbohydrate degradation; glycolysis; D-glyceraldehyde 3-phosphate and glycerone phosphate from D-glucose: step 3/4. Its activity is regulated as follows. Allosterically activated by ADP and other diphosphonucleosides, and allosterically inhibited by phosphoenolpyruvate. Catalyzes the phosphorylation of D-fructose 6-phosphate to fructose 1,6-bisphosphate by ATP, the first committing step of glycolysis. The protein is ATP-dependent 6-phosphofructokinase of Listeria innocua serovar 6a (strain ATCC BAA-680 / CLIP 11262).